We begin with the raw amino-acid sequence, 914 residues long: MATTPDAAFETLMNGVTSWDLPKEPIPSELLLTGESAFPVMVNDKGQVLIAASSYGQGRLVVVSHESYLLHDGLVPFLLNVVKWLCPCPGAPIAVHSSLASLVNILGDSGINALVQPEPGEALGVYCIDAYNDALTEKLIQFLKNGGGLLIGGQALNWAAHHGHDKVLSIFPGNQVTSVAGVYFTDISANRDWFKVSKEIPNLRLYVQCEDELEDDQQQLLKGMSEIYIEAGVIPSQLLVHGQRAFPLGVDNSLNCFLAAARYGRGRVVLGGNESLILNQTMLPFVLNALHWLMGNQTGRIGLASDMKVLKSMLPNSSFQWSESELLTSDLSVFCCCSLANIDSEEVEEFVAEGGGLLIGAEAWSWGRRNPYSSCMTQYPDNIVLKRFGLGITSHVAQRGSFPFPNPEGTNYHFRRALSQFESVIYSRGSSLHESWLNKLSQDCFYMFQMTHQRISIYDSVKKHALKMIQSKDFPSVTEQYPIARGSSQAFLLSLAYELFKSGVDRSQLLPPPALLPPTESPITIKISTDNDNSWVSTGLYLPEGQVAQVLLPSEATHAKLKVLIGCHRDNISQARTYFRPPVMTYVYHLTSSQTSISWLYGGLLYIMVPNKYNQDNVSVTIRGAVSAPYFRLGKTTQEEWKNLITHSKAPWGELATDNIILTIPTVNLKELQDPYPLLQLWDKMVRAVAKLAARPFPFQRAERVVLDKQISFGFLHSGYPIMGLISIVEGIISEFKIRSHGIWGVIHELGHNHQKSGWTFPPHTTEALCNLWTIYVHETVLNIPREQAHPSLNPELRRQRIKYHLNKGAPLSNWIMWTALETYLQLQEGFGWEPFIQVFADYRTLSGLPQNNEDKMNLWVKKFSEAVHKNLAPFFEAWGWPVKYAVAKSLASLPEWQENPMKRYTAEGTEGRE.

Residues 533–832 (NSWVSTGLYL…TYLQLQEGFG (300 aa)) form the Peptidase M60 domain.

Belongs to the TCAF family. As to expression, prostate-specific. Present in both dorso-lateral and anterior prostate.

In terms of biological role, may play a role in the regulation of the cation channel TRPM8 activity. The chain is TRPM8 channel-associated factor 3 from Mus musculus (Mouse).